A 48-amino-acid chain; its full sequence is Large ribosomal subunit protein eL40 (48 aa).

The protein belongs to the eukaryotic ribosomal protein eL40 family.

This is Large ribosomal subunit protein eL40 from Methanocella arvoryzae (strain DSM 22066 / NBRC 105507 / MRE50).